The following is a 297-amino-acid chain: Ubiquinone biosynthesis protein COQ4, mitochondrial (297 aa).

Residues Met-1–Glu-54 constitute a mitochondrion transit peptide. Positions 178, 179, 182, and 194 each coordinate Zn(2+).

The protein belongs to the COQ4 family. In terms of assembly, component of a multi-subunit COQ enzyme complex, composed of at least COQ3, COQ4, COQ5, COQ6, COQ7 and COQ9. It depends on Zn(2+) as a cofactor.

Its subcellular location is the mitochondrion inner membrane. The enzyme catalyses a 4-hydroxy-3-methoxy-5-(all-trans-polyprenyl)benzoate + H(+) = a 2-methoxy-6-(all-trans-polyprenyl)phenol + CO2. Its pathway is cofactor biosynthesis; ubiquinone biosynthesis. Lyase that catalyzes the C1-decarboxylation of 4-hydroxy-3-methoxy-5-(all-trans-polyprenyl)benzoic acid into 2-methoxy-6-(all-trans-polyprenyl)phenol during ubiquinone biosynthesis. The chain is Ubiquinone biosynthesis protein COQ4, mitochondrial from Laccaria bicolor (strain S238N-H82 / ATCC MYA-4686) (Bicoloured deceiver).